We begin with the raw amino-acid sequence, 247 residues long: Probable transcriptional regulatory protein GTNG_2524 (247 aa).

Over residues 1–14 (MAGHSKWKNIQRRK) the composition is skewed to basic residues. Positions 1–21 (MAGHSKWKNIQRRKNAQDAKR) are disordered.

Belongs to the TACO1 family.

It localises to the cytoplasm. This is Probable transcriptional regulatory protein GTNG_2524 from Geobacillus thermodenitrificans (strain NG80-2).